We begin with the raw amino-acid sequence, 113 residues long: U11-theraphotoxin-Hhn1j (113 aa).

The N-terminal stretch at 1 to 21 (MNTVRVTFLLVFVLAVSLGQA) is a signal peptide. Residues 22 to 74 (DKDENRMEMQEKTEQGKSYLDFAENLLLQKLEELEAKLLEEDSEESRNSRQKR) constitute a propeptide that is removed on maturation. Residues 60 to 69 (LEEDSEESRN) are compositionally biased toward basic and acidic residues. Residues 60–83 (LEEDSEESRNSRQKRCIGEGVPCD) form a disordered region. 3 cysteine pairs are disulfide-bonded: C75–C90, C82–C95, and C89–C110.

This sequence belongs to the neurotoxin 14 (magi-1) family. 01 (HNTX-16) subfamily. As to expression, expressed by the venom gland.

It is found in the secreted. In terms of biological role, probable ion channel inhibitor. The sequence is that of U11-theraphotoxin-Hhn1j from Cyriopagopus hainanus (Chinese bird spider).